A 105-amino-acid polypeptide reads, in one-letter code: Large ribosomal subunit protein uL24 (105 aa).

The protein belongs to the universal ribosomal protein uL24 family. As to quaternary structure, part of the 50S ribosomal subunit.

Its function is as follows. One of two assembly initiator proteins, it binds directly to the 5'-end of the 23S rRNA, where it nucleates assembly of the 50S subunit. One of the proteins that surrounds the polypeptide exit tunnel on the outside of the subunit. The chain is Large ribosomal subunit protein uL24 from Xylella fastidiosa (strain M23).